We begin with the raw amino-acid sequence, 618 residues long: Proline--tRNA ligase (618 aa).

This sequence belongs to the class-II aminoacyl-tRNA synthetase family. ProS type 1 subfamily. As to quaternary structure, homodimer.

The protein resides in the cytoplasm. The enzyme catalyses tRNA(Pro) + L-proline + ATP = L-prolyl-tRNA(Pro) + AMP + diphosphate. Functionally, catalyzes the attachment of proline to tRNA(Pro) in a two-step reaction: proline is first activated by ATP to form Pro-AMP and then transferred to the acceptor end of tRNA(Pro). As ProRS can inadvertently accommodate and process non-cognate amino acids such as alanine and cysteine, to avoid such errors it has two additional distinct editing activities against alanine. One activity is designated as 'pretransfer' editing and involves the tRNA(Pro)-independent hydrolysis of activated Ala-AMP. The other activity is designated 'posttransfer' editing and involves deacylation of mischarged Ala-tRNA(Pro). The misacylated Cys-tRNA(Pro) is not edited by ProRS. This is Proline--tRNA ligase from Streptococcus pyogenes serotype M5 (strain Manfredo).